The chain runs to 157 residues: 6,7-dimethyl-8-ribityllumazine synthase (157 aa).

Residues F23, 57-59, and 81-83 contribute to the 5-amino-6-(D-ribitylamino)uracil site; these read AFE and AVI. (2S)-2-hydroxy-3-oxobutyl phosphate is bound at residue 86–87; the sequence is AT. H89 serves as the catalytic Proton donor. F114 is a binding site for 5-amino-6-(D-ribitylamino)uracil. R128 is a binding site for (2S)-2-hydroxy-3-oxobutyl phosphate.

The protein belongs to the DMRL synthase family.

It catalyses the reaction (2S)-2-hydroxy-3-oxobutyl phosphate + 5-amino-6-(D-ribitylamino)uracil = 6,7-dimethyl-8-(1-D-ribityl)lumazine + phosphate + 2 H2O + H(+). Its pathway is cofactor biosynthesis; riboflavin biosynthesis; riboflavin from 2-hydroxy-3-oxobutyl phosphate and 5-amino-6-(D-ribitylamino)uracil: step 1/2. Functionally, catalyzes the formation of 6,7-dimethyl-8-ribityllumazine by condensation of 5-amino-6-(D-ribitylamino)uracil with 3,4-dihydroxy-2-butanone 4-phosphate. This is the penultimate step in the biosynthesis of riboflavin. This Desulforapulum autotrophicum (strain ATCC 43914 / DSM 3382 / VKM B-1955 / HRM2) (Desulfobacterium autotrophicum) protein is 6,7-dimethyl-8-ribityllumazine synthase.